The following is a 111-amino-acid chain: uncharacterized protein (111 aa).

Homodimer, or homotetramer.

This is an uncharacterized protein from Bacillus subtilis (strain 168).